Reading from the N-terminus, the 162-residue chain is Regulator of sigma D (162 aa).

This sequence belongs to the Rsd/AlgQ family. As to quaternary structure, interacts with RpoD.

It is found in the cytoplasm. Its function is as follows. Binds RpoD and negatively regulates RpoD-mediated transcription activation by preventing the interaction between the primary sigma factor RpoD with the catalytic core of the RNA polymerase and with promoter DNA. May be involved in replacement of the RNA polymerase sigma subunit from RpoD to RpoS during the transition from exponential growth to the stationary phase. This is Regulator of sigma D from Salmonella agona (strain SL483).